Reading from the N-terminus, the 101-residue chain is Small ribosomal subunit protein bS6 (101 aa).

It belongs to the bacterial ribosomal protein bS6 family.

Binds together with bS18 to 16S ribosomal RNA. This is Small ribosomal subunit protein bS6 from Nitratidesulfovibrio vulgaris (strain ATCC 29579 / DSM 644 / CCUG 34227 / NCIMB 8303 / VKM B-1760 / Hildenborough) (Desulfovibrio vulgaris).